A 1752-amino-acid chain; its full sequence is DNA-directed RNA polymerase II subunit rpb1 (1752 aa).

Positions 69, 72, 79, 82, 109, 112, 150, and 175 each coordinate Zn(2+). Aspartate 487, aspartate 489, and aspartate 491 together coordinate Mg(2+). The segment at proline 816–glutamate 828 is bridging helix. A Glycyl lysine isopeptide (Lys-Gly) (interchain with G-Cter in ubiquitin) cross-link involves residue lysine 1252. 4 positions are modified to phosphoserine: serine 1489, serine 1499, serine 1506, and serine 1529. Tyrosine 1531 is subject to Phosphotyrosine. Residues threonine 1554–serine 1752 form a disordered region. 5 consecutive repeat copies span residues tyrosine 1558 to glycine 1564, tyrosine 1578 to serine 1584, tyrosine 1585 to serine 1591, tyrosine 1592 to serine 1598, and tyrosine 1599 to serine 1605. The C-terminal domain (CTD); 26 X 7 AA approximate tandem repeats of Y-S-P-[TS]-S-P-S stretch occupies residues tyrosine 1558–serine 1752. A 6; approximate repeat occupies tyrosine 1606 to serine 1612. 20 tandem repeats follow at residues tyrosine 1613 to serine 1619, tyrosine 1620 to serine 1626, tyrosine 1627 to serine 1633, tyrosine 1634 to serine 1640, tyrosine 1641 to serine 1647, tyrosine 1648 to serine 1654, tyrosine 1655 to serine 1661, tyrosine 1662 to serine 1668, tyrosine 1669 to serine 1675, tyrosine 1676 to serine 1682, tyrosine 1683 to serine 1689, tyrosine 1690 to serine 1696, tyrosine 1697 to serine 1703, tyrosine 1704 to serine 1710, tyrosine 1711 to serine 1717, tyrosine 1718 to serine 1724, tyrosine 1725 to serine 1731, tyrosine 1732 to serine 1738, tyrosine 1739 to serine 1745, and tyrosine 1746 to serine 1752.

Belongs to the RNA polymerase beta' chain family. Component of the RNA polymerase II (Pol II) complex consisting of 12 subunits. The tandem 7 residues repeats in the C-terminal domain (CTD) can be highly phosphorylated. The phosphorylation activates Pol II. Phosphorylation occurs mainly at residues 'Ser-2' and 'Ser-5' of the heptapeptide repeat. The phosphorylation state is believed to result from the balanced action of site-specific CTD kinases and phosphatase, and a 'CTD code' that specifies the position of Pol II within the transcription cycle has been proposed. In terms of processing, following transcription stress, the elongating form of RNA polymerase II (RNA pol IIo) is polyubiquitinated via 'Lys-63'-linkages on Lys-1252 at DNA damage sites without leading to degradation: ubiquitination promotes RNA pol IIo backtracking to allow access by the transcription-coupled nucleotide excision repair (TC-NER) machinery. Subsequent def1-dependent polyubiquitination by the elongin complex via 'Lys-48'-linkages may lead to proteasome-mediated degradation; presumably at stalled RNA pol II where TC-NER has failed, to halt global transcription and enable 'last resort' DNA repair pathways.

It is found in the nucleus. It carries out the reaction RNA(n) + a ribonucleoside 5'-triphosphate = RNA(n+1) + diphosphate. Functionally, DNA-dependent RNA polymerase catalyzes the transcription of DNA into RNA using the four ribonucleoside triphosphates as substrates. Largest and catalytic component of RNA polymerase II which synthesizes mRNA precursors and many functional non-coding RNAs. Forms the polymerase active center together with the second largest subunit. Pol II is the central component of the basal RNA polymerase II transcription machinery. It is composed of mobile elements that move relative to each other. RPB1 is part of the core element with the central large cleft, the clamp element that moves to open and close the cleft and the jaws that are thought to grab the incoming DNA template. At the start of transcription, a single-stranded DNA template strand of the promoter is positioned within the central active site cleft of Pol II. A bridging helix emanates from RPB1 and crosses the cleft near the catalytic site and is thought to promote translocation of Pol II by acting as a ratchet that moves the RNA-DNA hybrid through the active site by switching from straight to bent conformations at each step of nucleotide addition. During transcription elongation, Pol II moves on the template as the transcript elongates. Elongation is influenced by the phosphorylation status of the C-terminal domain (CTD) of Pol II largest subunit (RPB1), which serves as a platform for assembly of factors that regulate transcription initiation, elongation, termination and mRNA processing. In Schizosaccharomyces pombe (strain 972 / ATCC 24843) (Fission yeast), this protein is DNA-directed RNA polymerase II subunit rpb1 (rpb1).